Here is a 258-residue protein sequence, read N- to C-terminus: Tryptophan synthase alpha chain (258 aa).

Residues Glu52 and Asp63 each act as proton acceptor in the active site.

Belongs to the TrpA family. As to quaternary structure, tetramer of two alpha and two beta chains.

It catalyses the reaction (1S,2R)-1-C-(indol-3-yl)glycerol 3-phosphate + L-serine = D-glyceraldehyde 3-phosphate + L-tryptophan + H2O. It participates in amino-acid biosynthesis; L-tryptophan biosynthesis; L-tryptophan from chorismate: step 5/5. Functionally, the alpha subunit is responsible for the aldol cleavage of indoleglycerol phosphate to indole and glyceraldehyde 3-phosphate. The chain is Tryptophan synthase alpha chain from Streptococcus pneumoniae serotype 4 (strain ATCC BAA-334 / TIGR4).